We begin with the raw amino-acid sequence, 182 residues long: Adenine phosphoribosyltransferase (182 aa).

The protein belongs to the purine/pyrimidine phosphoribosyltransferase family. In terms of assembly, homodimer.

The protein resides in the cytoplasm. It carries out the reaction AMP + diphosphate = 5-phospho-alpha-D-ribose 1-diphosphate + adenine. The protein operates within purine metabolism; AMP biosynthesis via salvage pathway; AMP from adenine: step 1/1. Catalyzes a salvage reaction resulting in the formation of AMP, that is energically less costly than de novo synthesis. The chain is Adenine phosphoribosyltransferase from Pseudomonas fluorescens (strain SBW25).